The following is a 216-amino-acid chain: UPF0502 protein VC0395_0676/VC395_A0574 (216 aa).

It belongs to the UPF0502 family.

This is UPF0502 protein VC0395_0676/VC395_A0574 from Vibrio cholerae serotype O1 (strain ATCC 39541 / Classical Ogawa 395 / O395).